Consider the following 403-residue polypeptide: Palmitoyltransferase ZDHHC23-A (403 aa).

The Cytoplasmic segment spans residues 1–70 (MKRERFKPPE…ADRLGVSCCT (70 aa)). Residues 71–91 (VGPLRLELSVLPPMVLIPGLL) traverse the membrane as a helical segment. Position 92 (Arg-92) is a topological domain, lumenal. A helical membrane pass occupies residues 93-113 (VAAINCLLGVIILTALPLLVL). At 114-125 (WYYYMTHRRKRR) the chain is on the cytoplasmic side. Residues 126-146 (TLFFLSLALFSLAYMYYLFLT) form a helical membrane-spanning segment. The Lumenal portion of the chain corresponds to 147-153 (EIVPRGD). A helical membrane pass occupies residues 154–174 (VTHLQVVTATTGMMLTLISLV). Over 175 to 268 (RTKQGPGFVK…NSCVGQANHR (94 aa)) the chain is Cytoplasmic. The DHHC domain occupies 225–275 (KKCPVCQLVRPPRAGHCRICGACVLRMDHHCVWINSCVGQANHRQFILTLL). The active-site S-palmitoyl cysteine intermediate is Cys-255. Residues 269-289 (QFILTLLLFLLTSFYGISLVL) traverse the membrane as a helical segment. Residues 290 to 319 (RSICPKQSLFTAMLYCPGVYNQYSTALCFT) lie on the Lumenal side of the membrane. A helical transmembrane segment spans residues 320 to 340 (CVWYSVIITGGLLHLFILQII). Topologically, residues 341-403 (NVSCNVTERE…GSSLNLTDMV (63 aa)) are cytoplasmic.

The protein belongs to the DHHC palmitoyltransferase family.

The protein resides in the golgi apparatus membrane. It is found in the golgi apparatus. It localises to the trans-Golgi network membrane. The catalysed reaction is L-cysteinyl-[protein] + hexadecanoyl-CoA = S-hexadecanoyl-L-cysteinyl-[protein] + CoA. In terms of biological role, palmitoyltransferase that could catalyze the addition of palmitate onto various protein substrates and be involved in a variety of cellular processes. This Danio rerio (Zebrafish) protein is Palmitoyltransferase ZDHHC23-A (zdhhc23a).